The sequence spans 497 residues: Ammonium transporter Rh type C (497 aa).

Topologically, residues 1–9 are cytoplasmic; it reads MAWNTNLRG. A helical transmembrane segment spans residues 10 to 30; sequence RLPITCLILQVTMVVLFGVFV. The Extracellular portion of the chain corresponds to 31–61; sequence RYDIQADAHWWLEKKRKNISSDVENEFYYRY. Asparagine 48 carries N-linked (GlcNAc...) asparagine glycosylation. A helical transmembrane segment spans residues 62 to 82; sequence PSFEDVHAMVFVGFGFLMTYL. Residues 83–93 are Cytoplasmic-facing; sequence QRYGFSAVGFN. The helical transmembrane segment at 94–114 threads the bilayer; the sequence is FLLAAFGIQWALLMQGWFHFF. The Extracellular segment spans residues 115–125; that stretch reads EEGHILLSVEN. The helical transmembrane segment at 126 to 145 threads the bilayer; the sequence is LIQADFCVASTCVAFGAVLG. Over 146 to 151 the chain is Cytoplasmic; it reads KISPMQ. Residues 152-174 form a helical membrane-spanning segment; sequence LLIMTFFQVTLFTVNEFILLNLI. Over 175–179 the chain is Extracellular; sequence EAKDA. The chain crosses the membrane as a helical span at residues 180–200; that stretch reads GGSMTIHTFGAYFGLTVTWIL. Over 201–219 the chain is Cytoplasmic; it reads YRKNLEQSKQRQSSVYHSD. The chain crosses the membrane as a helical span at residues 220-240; that stretch reads LFAMIGTLFLWIYWPSFNSAS. The Extracellular segment spans residues 241–251; the sequence is SFHGDTQHRAA. A helical membrane pass occupies residues 252–272; that stretch reads LNTYLSLAASVLTTVAVSSVI. Residues 273–282 lie on the Cytoplasmic side of the membrane; the sequence is HKKGKLDMVH. Residues 283–303 traverse the membrane as a helical segment; it reads IQNATLAGGVGVGTAAEMMLT. Position 304 (proline 304) is a topological domain, extracellular. A helical membrane pass occupies residues 305–325; the sequence is YGALIVGFFCGILSTLGFAYL. The Cytoplasmic segment spans residues 326–340; that stretch reads SPFLESRLRIQDTCG. Residues 341–361 traverse the membrane as a helical segment; it reads IHNLHGIPGIIGGIVGAVTAA. Topologically, residues 362-395 are extracellular; the sequence is YSSPDVYGEPGIVHSFGFGGYKADWTKRMQGRSQ. Residues 396 to 416 traverse the membrane as a helical segment; it reads IFGLLLSLAMALVGGIIVGFI. The Cytoplasmic portion of the chain corresponds to 417-497; sequence LKLPFWGQAS…ATVTSSSLVH (81 aa).

The protein belongs to the ammonium transporter (TC 2.A.49) family. Rh subfamily. In terms of assembly, homotrimer. In terms of processing, N-glycosylated. In terms of tissue distribution, expressed by connecting tubule cells and intercalated cells of the collecting duct in kidney (at protein level).

The protein localises to the cell membrane. It localises to the apical cell membrane. The enzyme catalyses NH4(+)(in) = NH4(+)(out). The catalysed reaction is methylamine(out) = methylamine(in). It carries out the reaction CO2(out) = CO2(in). Functionally, ammonium transporter involved in the maintenance of acid-base homeostasis. Transports ammonium and its related derivative methylammonium across the plasma membrane of epithelial cells likely contributing to renal transepithelial ammonia transport and ammonia metabolism. Postulated to primarily mediate an electroneutral bidirectional transport of NH3 ammonia species according to a mechanism that implies interaction of an NH4(+) ion with acidic residues of the pore entry followed by dissociation of NH4(+) into NH3 and H(+). As a result NH3 transits through the central pore and is protonated on the extracellular side reforming NH4(+). May act as a CO2 channel providing for renal acid secretion. This chain is Ammonium transporter Rh type C (Rhcg), found in Rattus norvegicus (Rat).